Reading from the N-terminus, the 297-residue chain is 2,3,4,5-tetrahydropyridine-2,6-dicarboxylate N-succinyltransferase (297 aa).

Residues aspartate 148 and glutamate 165 each contribute to the Mg(2+) site. Glutamate 181 acts as the Acyl-anhydride intermediate in catalysis. Residues arginine 183, glycine 198, serine 201, alanine 224, 239–240, glycine 247, lysine 258, and 271–274 contribute to the succinyl-CoA site; these read EA and RRDS.

The protein belongs to the type 2 tetrahydrodipicolinate N-succinyltransferase family. Homotrimer.

Its subcellular location is the cytoplasm. It carries out the reaction (S)-2,3,4,5-tetrahydrodipicolinate + succinyl-CoA + H2O = (S)-2-succinylamino-6-oxoheptanedioate + CoA. It participates in amino-acid biosynthesis; L-lysine biosynthesis via DAP pathway; LL-2,6-diaminopimelate from (S)-tetrahydrodipicolinate (succinylase route): step 1/3. Catalyzes the conversion of the cyclic tetrahydrodipicolinate (THDP) into the acyclic N-succinyl-L-2-amino-6-oxopimelate using succinyl-CoA. The sequence is that of 2,3,4,5-tetrahydropyridine-2,6-dicarboxylate N-succinyltransferase from Corynebacterium glutamicum (strain ATCC 13032 / DSM 20300 / JCM 1318 / BCRC 11384 / CCUG 27702 / LMG 3730 / NBRC 12168 / NCIMB 10025 / NRRL B-2784 / 534).